A 443-amino-acid chain; its full sequence is Threonine/serine transporter TdcC (443 aa).

11 consecutive transmembrane segments (helical) span residues 24-44 (WVLG…PISA), 45-65 (GIGG…IAFF), 95-115 (VGGV…LWIY), 140-160 (VVAL…KDLM), 163-183 (VMGY…LSLI), 207-227 (ILVT…FSPI), 259-279 (ASVL…FTLS), 319-339 (ASII…LGTL), 363-383 (LNMI…YINP), 385-405 (ILDL…CLLP), and 423-443 (SNYF…YQLM).

It belongs to the amino acid/polyamine transporter 2 family. SdaC/TdcC subfamily.

The protein localises to the cell inner membrane. The enzyme catalyses L-threonine(in) + H(+)(in) = L-threonine(out) + H(+)(out). The catalysed reaction is L-serine(in) + H(+)(in) = L-serine(out) + H(+)(out). Involved in the import of threonine and serine into the cell, with the concomitant import of a proton (symport system). The chain is Threonine/serine transporter TdcC from Edwardsiella tarda.